The sequence spans 281 residues: Eukaryotic translation initiation factor 3 subunit G (281 aa).

The disordered stretch occupies residues 1–32 (MSRPAGRTDWAEEDDETELALPSQTVVKNKDG). In terms of domain architecture, RRM spans 202–280 (ATLRVTNVSE…LILRVEFAKK (79 aa)).

The protein belongs to the eIF-3 subunit G family. In terms of assembly, component of the eukaryotic translation initiation factor 3 (eIF-3) complex.

The protein resides in the cytoplasm. Its function is as follows. RNA-binding component of the eukaryotic translation initiation factor 3 (eIF-3) complex, which is involved in protein synthesis of a specialized repertoire of mRNAs and, together with other initiation factors, stimulates binding of mRNA and methionyl-tRNAi to the 40S ribosome. The eIF-3 complex specifically targets and initiates translation of a subset of mRNAs involved in cell proliferation. This subunit can bind 18S rRNA. The sequence is that of Eukaryotic translation initiation factor 3 subunit G from Phaeosphaeria nodorum (strain SN15 / ATCC MYA-4574 / FGSC 10173) (Glume blotch fungus).